Reading from the N-terminus, the 421-residue chain is UDP-N-acetylglucosamine 1-carboxyvinyltransferase (421 aa).

22–23 (KN) lines the phosphoenolpyruvate pocket. R93 is a UDP-N-acetyl-alpha-D-glucosamine binding site. C117 functions as the Proton donor in the catalytic mechanism. C117 is modified (2-(S-cysteinyl)pyruvic acid O-phosphothioketal). Residues 122-126 (RPVDL), D308, and I330 each bind UDP-N-acetyl-alpha-D-glucosamine.

Belongs to the EPSP synthase family. MurA subfamily.

It localises to the cytoplasm. It catalyses the reaction phosphoenolpyruvate + UDP-N-acetyl-alpha-D-glucosamine = UDP-N-acetyl-3-O-(1-carboxyvinyl)-alpha-D-glucosamine + phosphate. Its pathway is cell wall biogenesis; peptidoglycan biosynthesis. In terms of biological role, cell wall formation. Adds enolpyruvyl to UDP-N-acetylglucosamine. The protein is UDP-N-acetylglucosamine 1-carboxyvinyltransferase of Pseudomonas putida (strain W619).